Reading from the N-terminus, the 236-residue chain is MTRRYWNINLEEMMDAGIHFGHGTRKWNPKMAPYISAKRKGIHIINLTRTARFLSEACDLVFDAASRGKQFLIVGTKNKAADSVAQAAIKARCHYVNKKWLGGMLTNWYTTETRLHKFRDLRTEQKTGRLKRLPKRDAAVLKRQISHLQTYLGGIKYMTGLPDIVIIVDQQEEYTALQECITLRIPTICLIDTNCDPDLADISIPANDDAIASIRLILNKLVFAICEGRSSYIRNS.

Belongs to the universal ribosomal protein uS2 family.

The protein resides in the plastid. Its subcellular location is the chloroplast. The protein is Small ribosomal subunit protein uS2c (rps2) of Morus indica (Mulberry).